A 62-amino-acid chain; its full sequence is Large ribosomal subunit protein bL28 (62 aa).

It belongs to the bacterial ribosomal protein bL28 family.

The chain is Large ribosomal subunit protein bL28 from Frankia casuarinae (strain DSM 45818 / CECT 9043 / HFP020203 / CcI3).